The sequence spans 481 residues: Two-component response regulator ORR32 (481 aa).

The Response regulatory domain occupies 13–138; the sequence is HVMLVDDDTK…TIALWRVVAW (126 aa). The residue at position 66 (Asp-66) is a 4-aspartylphosphate.

It belongs to the ARR family. Type-B subfamily. Post-translationally, two-component system major event consists of a His-to-Asp phosphorelay between a sensor histidine kinase (HK) and a response regulator (RR). In plants, the His-to-Asp phosphorelay involves an additional intermediate named Histidine-containing phosphotransfer protein (HPt). This multistep phosphorelay consists of a His-Asp-His-Asp sequential transfer of a phosphate group between first a His and an Asp of the HK protein, followed by the transfer to a conserved His of the HPt protein and finally the transfer to an Asp in the receiver domain of the RR protein.

Functionally, functions as a response regulator involved in His-to-Asp phosphorelay signal transduction system. Phosphorylation of the Asp residue in the receiver domain activates the ability of the protein to promote the transcription of target genes. May directly activate some type-A response regulators in response to cytokinins. The protein is Two-component response regulator ORR32 of Oryza sativa subsp. japonica (Rice).